A 91-amino-acid chain; its full sequence is RNA-binding protein Hfq (91 aa).

Residues 9–68 form the Sm domain; the sequence is DPFLNALRRERVPVSVYLVNGIKLQGTIESFDQFVVLLRNTVSQMVYKHAISTVVPARNV.

The protein belongs to the Hfq family. Homohexamer.

RNA chaperone that binds small regulatory RNA (sRNAs) and mRNAs to facilitate mRNA translational regulation in response to envelope stress, environmental stress and changes in metabolite concentrations. Also binds with high specificity to tRNAs. This Stenotrophomonas maltophilia (strain K279a) protein is RNA-binding protein Hfq.